We begin with the raw amino-acid sequence, 516 residues long: 2,3-bisphosphoglycerate-independent phosphoglycerate mutase (516 aa).

Residues D14 and S64 each contribute to the Mn(2+) site. The active-site Phosphoserine intermediate is the S64. Residues H125, 155–156 (RD), R187, R193, 263–266 (RPDR), and K337 contribute to the substrate site. Residues D404, H408, D445, H446, and H464 each contribute to the Mn(2+) site.

Belongs to the BPG-independent phosphoglycerate mutase family. As to quaternary structure, monomer. Mn(2+) is required as a cofactor.

The catalysed reaction is (2R)-2-phosphoglycerate = (2R)-3-phosphoglycerate. Its pathway is carbohydrate degradation; glycolysis; pyruvate from D-glyceraldehyde 3-phosphate: step 3/5. Its function is as follows. Catalyzes the interconversion of 2-phosphoglycerate and 3-phosphoglycerate. This is 2,3-bisphosphoglycerate-independent phosphoglycerate mutase from Saccharophagus degradans (strain 2-40 / ATCC 43961 / DSM 17024).